The following is a 97-amino-acid chain: Large ribosomal subunit protein uL23 (97 aa).

This sequence belongs to the universal ribosomal protein uL23 family. Part of the 50S ribosomal subunit. Contacts protein L29, and trigger factor when it is bound to the ribosome.

Its function is as follows. One of the early assembly proteins it binds 23S rRNA. One of the proteins that surrounds the polypeptide exit tunnel on the outside of the ribosome. Forms the main docking site for trigger factor binding to the ribosome. This is Large ribosomal subunit protein uL23 from Lactiplantibacillus plantarum (strain ATCC BAA-793 / NCIMB 8826 / WCFS1) (Lactobacillus plantarum).